The sequence spans 175 residues: ADP-ribosylation factor 6 (175 aa).

Residue Gly-2 is the site of N-myristoyl glycine attachment. The N6-myristoyl lysine moiety is linked to residue Lys-3. Residues 23 to 28 (AAGKTT), 41 to 44 (TIPT), 63 to 67 (DVGGQ), 122 to 125 (NKQD), and 155 to 156 (CA) contribute to the GTP site.

The protein belongs to the small GTPase superfamily. Arf family. In terms of assembly, interacts (when activated) with GGA1, GGA2 and GGA3; the interaction is required for proper subcellular location of GGA1, GGA2 and GGA3. Interacts with PIP5K1C. Interacts with USP6 (via Rab-GAP TBC domain). Interacts with RAB11FIP3 and RAB11FIP4. Interacts with HERC1. Interacts with ARHGAP21. Interacts with ASAP3; the interaction is stabilized by calcium ions. Interacts with NCS1/FREQ at the plasma membrane. Interacts with TBC1D24. Interacts with ECPAS. Interacts with MICALL1. Interacts with SPAG9 homodimers, forming heterotetramers. Interacts with CYTH3. Interacts with ASAP2. Interacts with UACA. Interacts with KIF23, forming heterodimers and heterotetramers. Interacts with C9orf72. Interacts (GTP-bound form) with TJAP1/PILT. Interacts with PRKAA2. Interacts with CD36 (when palmitoylated); this interaction mediates CD36 transport from the Golgi to the plasma membrane. Interacts with APBB1. As to quaternary structure, (Microbial infection) Interacts with the V.cholerae enterotoxin subunit A1; this causes a conformation change so that the toxin can bind NAD and catalyze the ADP-ribosylation of Gs alpha. (Microbial infection) Interacts with EspG from enteropathogenic E.coli. In terms of assembly, (Microbial infection) Identified in a complex with RAB1A and EspG from enteropathogenic E.coli. As to quaternary structure, (Microbial infection) Interacts with human enterovirus 71 protein VP1. GTP-bound form is myristoylated on Lys-3 by NMT1 and NMT2, allowing ARF6 to remain on membranes during the GTPase cycle, thereby promoting its activity. GDP-bound inactive form is demyristoylated on Lys-3 by SIRT2 at early endosomes or endocytic recycling compartment to allow its efficient activation by a guanine exchange factor (GEF) after GDP release. As to expression, ubiquitous, with higher levels in heart, substantia nigra, and kidney.

The protein localises to the cytoplasm. Its subcellular location is the cytosol. The protein resides in the cell membrane. It localises to the endosome membrane. It is found in the recycling endosome membrane. The protein localises to the cell projection. Its subcellular location is the filopodium membrane. The protein resides in the ruffle. It localises to the cleavage furrow. It is found in the midbody. The protein localises to the midbody ring. Its subcellular location is the early endosome membrane. The protein resides in the golgi apparatus. It localises to the trans-Golgi network membrane. The enzyme catalyses GTP + H2O = GDP + phosphate + H(+). With respect to regulation, activation is generally mediated by a guanine exchange factor (GEF), while inactivation through hydrolysis of bound GTP is catalyzed by a GTPase activating protein (GAP). Activated by ASAP3. Inactivated by ACAP1 and ACAP2. Activated by NGF via NTRK1. Activated by PRKAA2 through its C-terminal regulatory domain. Functionally, GTP-binding protein involved in protein trafficking that regulates endocytic recycling and cytoskeleton remodeling. GTP-bound form plays an important role in the transport of multiple palmitoylated proteins form the Golgi to the plasma membrane. Required for normal completion of mitotic cytokinesis. Plays a role in the reorganization of the actin cytoskeleton and the formation of stress fibers. Involved in the regulation of dendritic spine development, contributing to the regulation of dendritic branching and filopodia extension. Potentiates the neurite outgrowth in primary neurons by interacting with the molecular adapter APBB1. Plays an important role in membrane trafficking, during junctional remodeling and epithelial polarization. Regulates surface levels of adherens junction proteins such as CDH1. Required for NTRK1 sorting to the recycling pathway from early endosomes. (Microbial infection) Functions as an allosteric activator of the cholera toxin catalytic subunit, an ADP-ribosyltransferase. Its function is as follows. (Microbial infection) Plays a key role in the endocytosis of enterovirus 71 and thus viral entry into brain microvascular endothelial cells. The polypeptide is ADP-ribosylation factor 6 (Homo sapiens (Human)).